The following is a 224-amino-acid chain: 7-cyano-7-deazaguanine synthase (224 aa).

Position 10–20 (10–20) interacts with ATP; sequence LSGGLDSATVV. Positions 189, 199, 202, and 205 each coordinate Zn(2+).

It belongs to the QueC family. Requires Zn(2+) as cofactor.

It catalyses the reaction 7-carboxy-7-deazaguanine + NH4(+) + ATP = 7-cyano-7-deazaguanine + ADP + phosphate + H2O + H(+). It functions in the pathway purine metabolism; 7-cyano-7-deazaguanine biosynthesis. In terms of biological role, catalyzes the ATP-dependent conversion of 7-carboxy-7-deazaguanine (CDG) to 7-cyano-7-deazaguanine (preQ(0)). This Pseudomonas putida (strain ATCC 47054 / DSM 6125 / CFBP 8728 / NCIMB 11950 / KT2440) protein is 7-cyano-7-deazaguanine synthase.